The sequence spans 333 residues: Phosphoribosylformylglycinamidine cyclo-ligase (333 aa).

The protein belongs to the AIR synthase family.

Its subcellular location is the cytoplasm. The enzyme catalyses 2-formamido-N(1)-(5-O-phospho-beta-D-ribosyl)acetamidine + ATP = 5-amino-1-(5-phospho-beta-D-ribosyl)imidazole + ADP + phosphate + H(+). It participates in purine metabolism; IMP biosynthesis via de novo pathway; 5-amino-1-(5-phospho-D-ribosyl)imidazole from N(2)-formyl-N(1)-(5-phospho-D-ribosyl)glycinamide: step 2/2. In Methanosarcina barkeri (strain Fusaro / DSM 804), this protein is Phosphoribosylformylglycinamidine cyclo-ligase.